Here is a 500-residue protein sequence, read N- to C-terminus: Monocarboxylate transporter 1 (500 aa).

Topologically, residues 1-22 (MPPAVGGPVGYTPPDGGWGWAV) are cytoplasmic. A helical membrane pass occupies residues 23–44 (VIGAFISIGFSYAFPKSITVFF). Lys38 serves as a coordination point for (S)-lactate. At 45 to 55 (KEIEGIFHATT) the chain is on the extracellular side. The helical transmembrane segment at 56–80 (SEVSWISSIMLAVMYGGGPISSILV) threads the bilayer. Over 81–84 (NKYG) the chain is Cytoplasmic. A helical membrane pass occupies residues 85 to 105 (SRIVMIVGGCLSGCGLIAASF). The Extracellular portion of the chain corresponds to 106-109 (CNTV). The helical transmembrane segment at 110 to 132 (QQLYVCIGVIGGLGLAFNLNPAL) threads the bilayer. Residues 133–146 (TMIGKYFYKRRPLA) are Cytoplasmic-facing. Residues 147-169 (NGLAMAGSPVFLCTLAPLNQVFF) traverse the membrane as a helical segment. The Extracellular segment spans residues 170-174 (GIFGW). Residues 175-194 (RGSFLILGGLLLNCCVAGAL) traverse the membrane as a helical segment. Residues 195 to 261 (MRPIGPKPTK…FLDLTLFTHR (67 aa)) are Cytoplasmic-facing. Phosphoserine occurs at positions 210 and 213. Phosphothreonine is present on Thr231. The chain crosses the membrane as a helical span at residues 262 to 288 (GFLLYLSGNVIMFFGLFAPLVFLSSYG). The Extracellular portion of the chain corresponds to 289–295 (KSQHYSS). Residues 296–317 (EKSAFLLSILAFVDMVARPSMG) form a helical membrane-spanning segment. Asp309 lines the H(+) pocket. Arg313 is a (S)-lactate binding site. At 318–328 (LVANTKPIRPR) the chain is on the cytoplasmic side. The helical transmembrane segment at 329 to 349 (IQYFFAASVVANGVCHMLAPL) threads the bilayer. The Extracellular segment spans residues 350–353 (STTY). The chain crosses the membrane as a helical span at residues 354–375 (VGFCVYAGFFGFAFGWLSSVLF). Residues 376–389 (ETLMDLVGPQRFSS) lie on the Cytoplasmic side of the membrane. A helical membrane pass occupies residues 390–410 (AVGLVTIVECCPVLLGPPLLG). At 411 to 421 (RLNDMYGDYKY) the chain is on the extracellular side. A helical membrane pass occupies residues 422–443 (TYWACGVVLIISGIYLFIGMGI). The Cytoplasmic portion of the chain corresponds to 444–500 (NYRLLAKEQKANEQKKESKEEETSIDVAGKPNEVTKAAESPDQKDTDGGPKEEESPV). Over residues 454-465 (ANEQKKESKEEE) the composition is skewed to basic and acidic residues. Positions 454–500 (ANEQKKESKEEETSIDVAGKPNEVTKAAESPDQKDTDGGPKEEESPV) are disordered. Ser461 carries the phosphoserine modification. Phosphothreonine is present on Thr466. Residues Ser467, Ser483, and Ser498 each carry the phosphoserine modification. A compositionally biased stretch (basic and acidic residues) spans 482-500 (ESPDQKDTDGGPKEEESPV).

It belongs to the major facilitator superfamily. Monocarboxylate porter (TC 2.A.1.13) family. Interacts with EMB; interaction mediates SLC16A1 targeting to the plasma membrane. Interacts with isoform 2 of BSG; interaction mediates SLC16A1 targeting to the plasma membrane. Widely expressed. Detected in heart and in blood lymphocytes and monocytes (at protein level).

The protein localises to the cell membrane. Its subcellular location is the basolateral cell membrane. It localises to the apical cell membrane. It carries out the reaction (S)-lactate(in) + H(+)(in) = (S)-lactate(out) + H(+)(out). The catalysed reaction is acetate(out) + H(+)(out) = acetate(in) + H(+)(in). It catalyses the reaction acetoacetate(out) + H(+)(out) = acetoacetate(in) + H(+)(in). The enzyme catalyses pyruvate(out) + H(+)(out) = pyruvate(in) + H(+)(in). It carries out the reaction (R)-3-hydroxybutanoate(out) + H(+)(out) = (R)-3-hydroxybutanoate(in) + H(+)(in). The catalysed reaction is 3-methyl-2-oxobutanoate(out) + H(+)(out) = 3-methyl-2-oxobutanoate(in) + H(+)(in). It catalyses the reaction 4-methyl-2-oxopentanoate(out) + H(+)(out) = 4-methyl-2-oxopentanoate(in) + H(+)(in). The enzyme catalyses succinate(in) + 2 H(+)(in) = succinate(out) + 2 H(+)(out). Selectively inhibited by AZD3965, that acts as a competitive inhibitor binding to the central channel in the outward open conformation. Functionally, bidirectional proton-coupled monocarboxylate transporter. Catalyzes the rapid transport across the plasma membrane of many monocarboxylates such as lactate, pyruvate, acetate and the ketone bodies acetoacetate and beta-hydroxybutyrate, and thus contributes to the maintenance of intracellular pH. The transport direction is determined by the proton motive force and the concentration gradient of the substrate monocarboxylate. MCT1 is a major lactate exporter. Plays a role in cellular responses to a high-fat diet by modulating the cellular levels of lactate and pyruvate that contribute to the regulation of central metabolic pathways and insulin secretion, with concomitant effects on plasma insulin levels and blood glucose homeostasis. Facilitates the protonated monocarboxylate form of succinate export, that its transient protonation upon muscle cell acidification in exercising muscle and ischemic heart. Functions via alternate outward- and inward-open conformation states. Protonation and deprotonation of 309-Asp is essential for the conformational transition. In Homo sapiens (Human), this protein is Monocarboxylate transporter 1.